A 130-amino-acid polypeptide reads, in one-letter code: Small ribosomal subunit protein uS11 (130 aa).

Belongs to the universal ribosomal protein uS11 family. As to quaternary structure, part of the 30S ribosomal subunit.

Its function is as follows. Located on the platform of the 30S subunit. The protein is Small ribosomal subunit protein uS11 of Thermoplasma acidophilum (strain ATCC 25905 / DSM 1728 / JCM 9062 / NBRC 15155 / AMRC-C165).